The following is a 303-amino-acid chain: Bifunctional protein FolD (303 aa).

Residues 168–170 (GRS), Thr-197, and Val-238 each bind NADP(+).

The protein belongs to the tetrahydrofolate dehydrogenase/cyclohydrolase family. Homodimer.

The catalysed reaction is (6R)-5,10-methylene-5,6,7,8-tetrahydrofolate + NADP(+) = (6R)-5,10-methenyltetrahydrofolate + NADPH. It carries out the reaction (6R)-5,10-methenyltetrahydrofolate + H2O = (6R)-10-formyltetrahydrofolate + H(+). It participates in one-carbon metabolism; tetrahydrofolate interconversion. Functionally, catalyzes the oxidation of 5,10-methylenetetrahydrofolate to 5,10-methenyltetrahydrofolate and then the hydrolysis of 5,10-methenyltetrahydrofolate to 10-formyltetrahydrofolate. The chain is Bifunctional protein FolD from Desulfosudis oleivorans (strain DSM 6200 / JCM 39069 / Hxd3) (Desulfococcus oleovorans).